Here is a 506-residue protein sequence, read N- to C-terminus: Probable cytochrome P450 519E1 (506 aa).

Residues 1 to 21 form a helical membrane-spanning segment; it reads MGIGLIILYLLIGLLAYDFTK. C453 is a heme binding site.

Belongs to the cytochrome P450 family. Requires heme as cofactor.

The protein resides in the membrane. This chain is Probable cytochrome P450 519E1 (cyp519E1), found in Dictyostelium discoideum (Social amoeba).